Reading from the N-terminus, the 757-residue chain is Cartilage oligomeric matrix protein (757 aa).

Positions 1–20 are cleaved as a signal peptide; that stretch reads MVPDTACVLLLTLAALGASG. The tract at residues 22-86 is COMP N-terminal; sequence GQSPLGSDLG…SVRTGLPSVR (65 aa). The 40-residue stretch at 87 to 126 folds into the EGF-like 1 domain; it reads PLLHCAPGFCFPGVACIQTESGARCGPCPAGFTGNGSHCT. Disulfide bonds link cysteine 91-cysteine 102, cysteine 96-cysteine 111, cysteine 114-cysteine 125, cysteine 131-cysteine 142, cysteine 136-cysteine 151, cysteine 154-cysteine 178, cysteine 184-cysteine 197, cysteine 191-cysteine 206, cysteine 209-cysteine 221, cysteine 229-cysteine 243, cysteine 237-cysteine 253, cysteine 255-cysteine 266, cysteine 282-cysteine 287, cysteine 292-cysteine 312, cysteine 328-cysteine 348, cysteine 351-cysteine 371, cysteine 387-cysteine 407, cysteine 410-cysteine 430, cysteine 448-cysteine 468, cysteine 484-cysteine 504, and cysteine 520-cysteine 741. N-linked (GlcNAc...) asparagine glycosylation is present at asparagine 121. The EGF-like 2; calcium-binding domain occupies 127–179; the sequence is DVNECNAHPCFPRVRCINTSPGFRCEACPPGYSGPTHQGVGLAFAKANKQVCT. Positions 180-222 constitute an EGF-like 3; calcium-binding domain; it reads DINECETGQHNCVPNSVCINTRGSFQCGPCQPGFVGDQASGCQ. The EGF-like 4 domain occupies 225–267; the sequence is AQRFCPDGSPSECHEHADCVLERDGSRSCVCAVGWAGNGILCG. 8 TSP type-3 repeats span residues 268–300, 301–336, 337–359, 360–395, 396–418, 419–456, 457–492, and 493–528; these read RDTD…NSGQ, EDVD…NPDQ, RNTD…NDDQ, KDTD…NSDQ, KDSD…NPDQ, ADVD…NSAQ, EDSD…NPGQ, and EDAD…EVTL. Residues 298 to 503 are disordered; that stretch reads SGQEDVDRDG…DADRDGVGDV (206 aa). Composition is skewed to basic and acidic residues over residues 334–346 and 352–370; these read PDQR…KWGD and RSQK…RGDA. Residues 367 to 369 carry the Cell attachment site motif; the sequence is RGD. Residues 467–476 are compositionally biased toward acidic residues; that stretch reads ACDDDDDNDG. The tract at residues 527–757 is mediates cell survival and induction of the IAP family of survival proteins; sequence TLTDFRAFQT…DYETHQLRQA (231 aa). A TSP C-terminal domain is found at 532 to 746; the sequence is RAFQTVVLDP…LRYRCNDTIP (215 aa). N-linked (GlcNAc...) asparagine glycosylation occurs at asparagine 742.

This sequence belongs to the thrombospondin family. As to quaternary structure, pentamer; disulfide-linked. Exists in a more compact conformation in the presence of calcium and shows a more extended conformation in the absence of calcium. Interacts with ITGB3, ITGA5 and FN1. Binding to FN1 requires the presence of divalent cations (Ca(2+), Mg(2+) or Mn(2+)). The greatest amount of binding is seen in the presence of Mn(2+). Interacts with MATN1, MATN3, MATN4 and ACAN. Binds heparin, heparan sulfate and chondroitin sulfate. EDTA dimishes significantly its binding to ACAN and abolishes its binding to MATN3, MATN4 and chondroitin sulfate. Interacts with collagen I, II and IX, and interaction with these collagens is dependent on the presence of zinc ions. Interacts with ADAMTS12. Interacts with ITGA7. Ca(2+) serves as cofactor. Proteolytically cleaved by metalloproteases ADAMTS4 and ADAMTS1 with ADAMTS4 showing more potent activity. In terms of tissue distribution, abundantly expressed in the chondrocyte extracellular matrix, and is also found in bone, tendon, ligament and synovium and blood vessels. Increased amounts are produced during late stages of osteoarthritis in the area adjacent to the main defect.

Its subcellular location is the secreted. It is found in the extracellular space. It localises to the extracellular matrix. Plays a role in the structural integrity of cartilage via its interaction with other extracellular matrix proteins such as the collagens and fibronectin. Can mediate the interaction of chondrocytes with the cartilage extracellular matrix through interaction with cell surface integrin receptors. Could play a role in the pathogenesis of osteoarthritis. Potent suppressor of apoptosis in both primary chondrocytes and transformed cells. Suppresses apoptosis by blocking the activation of caspase-3 and by inducing the IAP family of survival proteins (BIRC3, BIRC2, BIRC5 and XIAP). Essential for maintaining a vascular smooth muscle cells (VSMCs) contractile/differentiated phenotype under physiological and pathological stimuli. Maintains this phenotype of VSMCs by interacting with ITGA7. This Homo sapiens (Human) protein is Cartilage oligomeric matrix protein.